A 400-amino-acid chain; its full sequence is Argininosuccinate synthase (400 aa).

ATP is bound at residue 8–16; that stretch reads AYSGGLDTS. Tyr87 contributes to the L-citrulline binding site. Gly117 contacts ATP. Residues Thr119, Asn123, and Asp124 each coordinate L-aspartate. Asn123 contacts L-citrulline. L-citrulline is bound by residues Arg127, Ser175, Glu260, and Tyr272.

It belongs to the argininosuccinate synthase family. Type 1 subfamily. As to quaternary structure, homotetramer.

It localises to the cytoplasm. It carries out the reaction L-citrulline + L-aspartate + ATP = 2-(N(omega)-L-arginino)succinate + AMP + diphosphate + H(+). It functions in the pathway amino-acid biosynthesis; L-arginine biosynthesis; L-arginine from L-ornithine and carbamoyl phosphate: step 2/3. The sequence is that of Argininosuccinate synthase from Mycolicibacterium vanbaalenii (strain DSM 7251 / JCM 13017 / BCRC 16820 / KCTC 9966 / NRRL B-24157 / PYR-1) (Mycobacterium vanbaalenii).